We begin with the raw amino-acid sequence, 177 residues long: Large ribosomal subunit protein uL6 (177 aa).

This sequence belongs to the universal ribosomal protein uL6 family. Part of the 50S ribosomal subunit.

Functionally, this protein binds to the 23S rRNA, and is important in its secondary structure. It is located near the subunit interface in the base of the L7/L12 stalk, and near the tRNA binding site of the peptidyltransferase center. The chain is Large ribosomal subunit protein uL6 from Bartonella quintana (strain Toulouse) (Rochalimaea quintana).